The primary structure comprises 74 residues: Guanine nucleotide-binding protein G(T) subunit gamma-T1 (74 aa).

Cys71 carries the cysteine methyl ester modification. Cys71 is lipidated: S-farnesyl cysteine. Positions 72–74 (VIS) are cleaved as a propeptide — removed in mature form.

Belongs to the G protein gamma family. In terms of assembly, g proteins are composed of 3 units, alpha, beta and gamma. In terms of tissue distribution, retinal rod outer segment.

The protein localises to the cell membrane. In terms of biological role, guanine nucleotide-binding proteins (G proteins) are involved as a modulator or transducer in various transmembrane signaling systems. The beta and gamma chains are required for the GTPase activity, for replacement of GDP by GTP, and for G protein-effector interaction. The polypeptide is Guanine nucleotide-binding protein G(T) subunit gamma-T1 (GNGT1) (Bos taurus (Bovine)).